Reading from the N-terminus, the 311-residue chain is DNA-directed RNA polymerase subunit alpha (311 aa).

An alpha N-terminal domain (alpha-NTD) region spans residues 1–228 (MQYQIERIDH…ELFQPLATVT (228 aa)). The tract at residues 239–311 (PSPEAQIPLE…ISIPQSRTSV (73 aa)) is alpha C-terminal domain (alpha-CTD).

The protein belongs to the RNA polymerase alpha chain family. As to quaternary structure, in cyanobacteria the RNAP catalytic core is composed of 2 alpha, 1 beta, 1 beta', 1 gamma and 1 omega subunit. When a sigma factor is associated with the core the holoenzyme is formed, which can initiate transcription.

The enzyme catalyses RNA(n) + a ribonucleoside 5'-triphosphate = RNA(n+1) + diphosphate. Its function is as follows. DNA-dependent RNA polymerase catalyzes the transcription of DNA into RNA using the four ribonucleoside triphosphates as substrates. This is DNA-directed RNA polymerase subunit alpha from Prochlorococcus marinus (strain MIT 9312).